Reading from the N-terminus, the 1000-residue chain is C-module-binding factor A (1000 aa).

The JmjC domain maps to 113 to 280; the sequence is PREWQEYLSH…ISYFSSLPHT (168 aa). The segment at 489–544 adopts a PHD-type; atypical zinc-finger fold; the sequence is KIKCHRCEKRFKKFSIIFCTNCNARFCEQCVVNTFGQNFQVLMKRNEWECFCCKGL. The RING-type; degenerate zinc-finger motif lies at 492 to 542; the sequence is CHRCEKRFKKFSIIFCTNCNARFCEQCVVNTFGQNFQVLMKRNEWECFCCK. Disordered regions lie at residues 561–647 and 660–818; these read RILN…SSYS and SYGS…KNLK. Low complexity-rich tracts occupy residues 574–647, 660–683, 700–710, 732–751, and 760–789; these read NNNN…SSYS, SYGS…NNNN, SSSSGSGSSNS, NNNN…NNHH, and NNNN…STST. Basic and acidic residues predominate over residues 805-818; the sequence is DNDKPKGRPPKNLK. A DNA-binding region (a.T hook) is located at residues 810–818; sequence KGRPPKNLK.

In terms of assembly, monomer.

It localises to the nucleus. Transcriptional regulator involved in phagocytosis and pinocytosis. Both activates and represses transcription. Regulates expression of acaA, carA, pkaC, csaA, cotB and lagC. Promotes amplification of the tRNA gene-associated retrotransposon TRE5-A, a mobile genetic element formerly called as Dictyostelium repetitive element (DRE). Suppresses agnC and agnE encoding argonaute proteins which are part of a RNA interference pathway controlling TRE5-A amplification. Required for amplification of both sense and antisense RNA transcripts, but does not activate their promoters found in A-module and C-module of the TRE5-A, respectively. Nevertheless, binds to distinct DNA sequences containing A and T stretches within the C-module in vitro. The polypeptide is C-module-binding factor A (Dictyostelium discoideum (Social amoeba)).